The following is a 256-amino-acid chain: MADWDAEQYLKFEDERTRPARDLLAQIPLDDPRRVADIGCGPGNSTELLVRRWPQARVTGVDTSADMLRQARERLPGHNFIEANIAHWAPPVGTDVVFANAVFQWVPNHLKHMQRLVGALEPGGVLAVQMPDNLDEPSHIMMREVAFQEPWRHQLAEAAQLRDNLPKPGAYYDALRPLCSRLEIWHTVYNHVLDDAMAIVEWVKGTGLRPFIDPLELPERKAYLAAYTARIAAAYPPQADGKVLLRFPRLFVVAIK.

This sequence belongs to the methyltransferase superfamily. Tam family.

Its subcellular location is the cytoplasm. It catalyses the reaction trans-aconitate + S-adenosyl-L-methionine = (E)-3-(methoxycarbonyl)pent-2-enedioate + S-adenosyl-L-homocysteine. Catalyzes the S-adenosylmethionine monomethyl esterification of trans-aconitate. This chain is Trans-aconitate 2-methyltransferase, found in Rhodopseudomonas palustris (strain BisB18).